Reading from the N-terminus, the 96-residue chain is Putative membrane protein insertion efficiency factor (96 aa).

The disordered stretch occupies residues 68 to 96 (DPVPEHFPARHPRPQGSPPTDHPPTDQPS). Positions 82–96 (QGSPPTDHPPTDQPS) are enriched in pro residues.

Belongs to the UPF0161 family.

The protein localises to the cell membrane. Functionally, could be involved in insertion of integral membrane proteins into the membrane. The sequence is that of Putative membrane protein insertion efficiency factor from Deinococcus radiodurans (strain ATCC 13939 / DSM 20539 / JCM 16871 / CCUG 27074 / LMG 4051 / NBRC 15346 / NCIMB 9279 / VKM B-1422 / R1).